Reading from the N-terminus, the 22-residue chain is Oxygen-evolving enhancer protein 2 (22 aa).

This sequence belongs to the PsbP family.

It is found in the plastid. The protein localises to the chloroplast thylakoid membrane. Its function is as follows. May be involved in the regulation of photosystem II. The chain is Oxygen-evolving enhancer protein 2 from Physcomitrium patens (Spreading-leaved earth moss).